The sequence spans 520 residues: GMP synthase [glutamine-hydrolyzing] (520 aa).

Residues 12-205 (KIIVLDYGSQ…AIFICGARGD (194 aa)) form the Glutamine amidotransferase type-1 domain. The active-site Nucleophile is the C89. Residues H179 and E181 contribute to the active site. The GMPS ATP-PPase domain maps to 206–395 (WSMDNFIDMQ…LGMPENIVWR (190 aa)). 233–239 (SGGVDSS) lines the ATP pocket.

Homodimer.

It carries out the reaction XMP + L-glutamine + ATP + H2O = GMP + L-glutamate + AMP + diphosphate + 2 H(+). The protein operates within purine metabolism; GMP biosynthesis; GMP from XMP (L-Gln route): step 1/1. In terms of biological role, catalyzes the synthesis of GMP from XMP. This Streptococcus uberis (strain ATCC BAA-854 / 0140J) protein is GMP synthase [glutamine-hydrolyzing].